The sequence spans 458 residues: Cysteine--tRNA ligase (458 aa).

Cys29 is a Zn(2+) binding site. Positions 31–41 (MTVYDLCHLGH) match the 'HIGH' region motif. Cys213, His238, and Glu242 together coordinate Zn(2+). A 'KMSKS' region motif is present at residues 270–274 (KMSKS). Position 273 (Lys273) interacts with ATP.

Belongs to the class-I aminoacyl-tRNA synthetase family. Monomer. Zn(2+) serves as cofactor.

The protein localises to the cytoplasm. The enzyme catalyses tRNA(Cys) + L-cysteine + ATP = L-cysteinyl-tRNA(Cys) + AMP + diphosphate. This is Cysteine--tRNA ligase from Acidovorax ebreus (strain TPSY) (Diaphorobacter sp. (strain TPSY)).